We begin with the raw amino-acid sequence, 297 residues long: MSFTVVGSNIYDTTLLMTRKGQNGAPDEVIPRPGFLTLLLNDIDSLRTRVELHNLIDNLNLATNEDYVKFAEYRTLFSQTTDMIRLAYTNGQPAVQTRATDSRTGSVFYANTLTGDKAGNLFRLLAPIAYRYLDVGLPRLFSYIHAQIGTTPAFRYNFDIQPIIKLAITNEPLDYGEWIGQEGIHELERNVMIILSCSNITILAVLSIVGLGVGSHIMTSAADQEAWVGSPFMLSTDNFGNARPFTAPNPSYAQTLRLPIPRIFSAPNRPVWVQSKTSETQSVSGSTHSDEKLTAPM.

The helical transmembrane segment at 191–211 (VMIILSCSNITILAVLSIVGL) threads the bilayer. The span at 275-287 (SKTSETQSVSGST) shows a compositional bias: polar residues. Residues 275–297 (SKTSETQSVSGSTHSDEKLTAPM) are disordered. Positions 288-297 (HSDEKLTAPM) are enriched in basic and acidic residues.

The protein resides in the host membrane. This is an uncharacterized protein from Cryphonectria parasitica mycoreovirus 1 (strain 9B21) (CpMYRV-1).